Consider the following 443-residue polypeptide: ATP synthase subunit b-delta (443 aa).

The interval Met1–Val168 is ATP synthase subunit b. Residues Phe4–Pro24 form a helical membrane-spanning segment. The tract at residues Gly169 to Asp443 is ATP synthase subunit delta.

This sequence in the N-terminal section; belongs to the ATPase B chain family. It in the C-terminal section; belongs to the ATPase delta chain family. F-type ATPases have 2 components, F(1) - the catalytic core - and F(0) - the membrane proton channel. F(1) has five subunits: alpha(3), beta(3), gamma(1), delta(1), epsilon(1). F(0) has three main subunits: a(1), b(2) and c(10-14). The alpha and beta chains form an alternating ring which encloses part of the gamma chain. F(1) is attached to F(0) by a central stalk formed by the gamma and epsilon chains, while a peripheral stalk is formed by the delta and b chains.

The protein localises to the cell membrane. In terms of biological role, f(1)F(0) ATP synthase produces ATP from ADP in the presence of a proton or sodium gradient. F-type ATPases consist of two structural domains, F(1) containing the extramembraneous catalytic core and F(0) containing the membrane proton channel, linked together by a central stalk and a peripheral stalk. During catalysis, ATP synthesis in the catalytic domain of F(1) is coupled via a rotary mechanism of the central stalk subunits to proton translocation. Its function is as follows. This fusion protein includes a component of the F(0) channel (subunit b) and of the F(1) subunit (subunit delta). Two copies of subunit b and one of delta together form the peripheral 'stator' stalk which links F(1) to F(0). In Mycobacterium sp. (strain JLS), this protein is ATP synthase subunit b-delta (atpFH).